Here is a 282-residue protein sequence, read N- to C-terminus: Biotin synthase (282 aa).

In terms of domain architecture, Radical SAM core spans 1 to 230; that stretch reads MSDNKIYLCA…NQMLMIAGGR (230 aa). Residues Cys-19, Cys-23, and Cys-26 each contribute to the [4Fe-4S] cluster site. Residues Cys-63, Cys-98, and Cys-156 each contribute to the [2Fe-2S] cluster site.

Belongs to the radical SAM superfamily. Biotin synthase family. Homodimer. It depends on [4Fe-4S] cluster as a cofactor. The cofactor is [2Fe-2S] cluster.

The enzyme catalyses (4R,5S)-dethiobiotin + (sulfur carrier)-SH + 2 reduced [2Fe-2S]-[ferredoxin] + 2 S-adenosyl-L-methionine = (sulfur carrier)-H + biotin + 2 5'-deoxyadenosine + 2 L-methionine + 2 oxidized [2Fe-2S]-[ferredoxin]. It functions in the pathway cofactor biosynthesis; biotin biosynthesis; biotin from 7,8-diaminononanoate: step 2/2. Catalyzes the conversion of dethiobiotin (DTB) to biotin by the insertion of a sulfur atom into dethiobiotin via a radical-based mechanism. The chain is Biotin synthase from Aliarcobacter butzleri (strain RM4018) (Arcobacter butzleri).